A 394-amino-acid polypeptide reads, in one-letter code: Protein NDRG1 (394 aa).

S2 carries the post-translational modification N-acetylserine. S2, S319, and S326 each carry phosphoserine. Residues 325 to 394 (RSRTASGSSV…AGPKSMEVSC (70 aa)) are disordered. Residues 327–339 (RTASGSSVTSLEG) are compositionally biased toward polar residues. T328 carries the post-translational modification Phosphothreonine. Phosphoserine is present on S330. S332 bears the Phosphoserine; by SGK1 mark. At S333 the chain carries Phosphoserine. T335 carries the phosphothreonine modification. Position 336 is a phosphoserine (S336). 3 repeat units span residues 339-348 (GTRSRSHTSE), 349-358 (GPRSRSHTSE), and 359-368 (GSRSRSHTSE). The tract at residues 339 to 368 (GTRSRSHTSEGPRSRSHTSEGSRSRSHTSE) is 3 X 10 AA tandem repeats of G-[PST]-R-S-R-S-H-T-S-E. T340 carries the phosphothreonine modification. S342 is modified (phosphoserine). Over residues 345–371 (HTSEGPRSRSHTSEGSRSRSHTSEDAR) the composition is skewed to basic and acidic residues. T346 is modified (phosphothreonine). S352 is modified (phosphoserine). T356 bears the Phosphothreonine; by SGK1 mark. Residues S362 and S364 each carry the phosphoserine modification. A phosphothreonine mark is found at T366 and T375. The segment covering 374 to 386 (ITPSSGATGNNAG) has biased composition (polar residues).

Belongs to the NDRG family. In terms of assembly, interacts with RAB4A (membrane-bound form); the interaction involves NDRG1 in vesicular recycling of CDH1. Interacts with APOA1, APOA2, PRA1 and RTN1. In terms of processing, under stress conditions, phosphorylated in the C-terminal on many serine and threonine residues. Phosphorylated in vitro by PKA. Phosphorylation enhanced by increased intracellular cAMP levels. Homocysteine induces dephosphorylation. Phosphorylation by SGK1 is cell cycle dependent.

The protein localises to the cytoplasm. It localises to the cytosol. Its subcellular location is the cytoskeleton. It is found in the microtubule organizing center. The protein resides in the centrosome. The protein localises to the nucleus. It localises to the cell membrane. In terms of biological role, stress-responsive protein involved in hormone responses, cell growth, and differentiation. Acts as a tumor suppressor in many cell types. Necessary but not sufficient for p53/TP53-mediated caspase activation and apoptosis. Has a role in cell trafficking notably of the Schwann cell and is necessary for the maintenance and development of the peripheral nerve myelin sheath. Required for vesicular recycling of CDH1 and TF. May also function in lipid trafficking. Protects cells from spindle disruption damage. Functions in p53/TP53-dependent mitotic spindle checkpoint. Regulates microtubule dynamics and maintains euploidy. This Rattus norvegicus (Rat) protein is Protein NDRG1 (Ndrg1).